The following is a 535-amino-acid chain: Reticuline oxidase (535 aa).

The first 23 residues, 1–23 (MMCRSLTLRFFLFIVLLQTCVRG), serve as a signal peptide directing secretion. An N-linked (GlcNAc...) asparagine glycan is attached at Asn-42. The 175-residue stretch at 71-245 (TVSKPSFIVM…YAWKIKLLPV (175 aa)) folds into the FAD-binding PCMH-type domain. The segment at residues 108-170 (HSYEGLSYTA…DTLGFTAGWC (63 aa)) is a cross-link (6-(S-cysteinyl)-8alpha-(pros-histidyl)-FAD (His-Cys)). Asn-475 is a glycosylation site (N-linked (GlcNAc...) asparagine).

The protein belongs to the oxygen-dependent FAD-linked oxidoreductase family. It depends on FAD as a cofactor. A metal cation is required as a cofactor. In terms of processing, the FAD cofactor is bound via a bicovalent 6-S-cysteinyl, 8alpha-N1-histidyl FAD linkage. As to expression, expressed in roots and stems. Not detected in leaves or reproductive organs. Restricted to the parietal region of sieve elements adjacent or proximal to laticifers.

The protein localises to the cytoplasmic vesicle. It carries out the reaction (S)-reticuline + O2 = (S)-scoulerine + H2O2 + H(+). It participates in alkaloid biosynthesis; (S)-scoulerine biosynthesis; (S)-scoulerine from (S)-reticuline: step 1/1. Functionally, oxygen-dependent FAD-dependent oxidoreductase essential to the formation of benzophenanthridine alkaloids in the response of plants to pathogenic attack. Catalyzes the stereospecific conversion of the N-methyl moiety of (S)-reticuline into the berberine bridge carbon of (S)-scoulerine. Involved in the biosynthesis of sanguinarine. The polypeptide is Reticuline oxidase (BBE1) (Papaver somniferum (Opium poppy)).